We begin with the raw amino-acid sequence, 111 residues long: MIGIVLVLASLLSVGGQLCQKQATRPLTTGGRRRHLMLWLGLALICMGAAMVLWLLVLQTLPVGIAYPMLSLNFVWVTLAAWKIWHEQVPPRHWLGVALIISGIIILGSAA.

3 helical membrane passes run 38 to 58 (LWLG…LLVL), 61 to 81 (LPVG…TLAA), and 91 to 111 (PRHW…GSAA). Residues 40–109 (LGLALICMGA…IISGIIILGS (70 aa)) enclose the EamA domain.

The protein belongs to the ArnE family. Heterodimer of ArnE and ArnF.

The protein resides in the cell inner membrane. It functions in the pathway bacterial outer membrane biogenesis; lipopolysaccharide biosynthesis. Functionally, translocates 4-amino-4-deoxy-L-arabinose-phosphoundecaprenol (alpha-L-Ara4N-phosphoundecaprenol) from the cytoplasmic to the periplasmic side of the inner membrane. The polypeptide is Probable 4-amino-4-deoxy-L-arabinose-phosphoundecaprenol flippase subunit ArnE (Salmonella heidelberg (strain SL476)).